A 327-amino-acid polypeptide reads, in one-letter code: Tetraacyldisaccharide 4'-kinase (327 aa).

52–59 (TLGGAGKT) is a binding site for ATP.

The protein belongs to the LpxK family.

It catalyses the reaction a lipid A disaccharide + ATP = a lipid IVA + ADP + H(+). Its pathway is glycolipid biosynthesis; lipid IV(A) biosynthesis; lipid IV(A) from (3R)-3-hydroxytetradecanoyl-[acyl-carrier-protein] and UDP-N-acetyl-alpha-D-glucosamine: step 6/6. Transfers the gamma-phosphate of ATP to the 4'-position of a tetraacyldisaccharide 1-phosphate intermediate (termed DS-1-P) to form tetraacyldisaccharide 1,4'-bis-phosphate (lipid IVA). The chain is Tetraacyldisaccharide 4'-kinase from Methylorubrum populi (strain ATCC BAA-705 / NCIMB 13946 / BJ001) (Methylobacterium populi).